Here is a 130-residue protein sequence, read N- to C-terminus: Small ribosomal subunit protein uS11 (130 aa).

This sequence belongs to the universal ribosomal protein uS11 family. In terms of assembly, part of the 30S ribosomal subunit. Interacts with proteins S7 and S18. Binds to IF-3.

Functionally, located on the platform of the 30S subunit, it bridges several disparate RNA helices of the 16S rRNA. Forms part of the Shine-Dalgarno cleft in the 70S ribosome. The protein is Small ribosomal subunit protein uS11 of Rippkaea orientalis (strain PCC 8801 / RF-1) (Cyanothece sp. (strain PCC 8801)).